A 282-amino-acid polypeptide reads, in one-letter code: NADPH-dependent 7-cyano-7-deazaguanine reductase (282 aa).

88–90 lines the substrate pocket; it reads IES. Position 90–91 (90–91) interacts with NADPH; the sequence is SK. Cys190 acts as the Thioimide intermediate in catalysis. The active-site Proton donor is Asp197. 229-230 provides a ligand contact to substrate; that stretch reads HE. An NADPH-binding site is contributed by 258–259; it reads RG.

The protein belongs to the GTP cyclohydrolase I family. QueF type 2 subfamily. In terms of assembly, homodimer.

Its subcellular location is the cytoplasm. It catalyses the reaction 7-aminomethyl-7-carbaguanine + 2 NADP(+) = 7-cyano-7-deazaguanine + 2 NADPH + 3 H(+). It functions in the pathway tRNA modification; tRNA-queuosine biosynthesis. Functionally, catalyzes the NADPH-dependent reduction of 7-cyano-7-deazaguanine (preQ0) to 7-aminomethyl-7-deazaguanine (preQ1). The chain is NADPH-dependent 7-cyano-7-deazaguanine reductase from Escherichia coli (strain K12 / MC4100 / BW2952).